A 331-amino-acid chain; its full sequence is Holliday junction branch migration complex subunit RuvB (331 aa).

The segment at 1-186 (MAKTMMQDRL…FGIVQRLEFY (186 aa)) is large ATPase domain (RuvB-L). Residues Ile25, Arg26, Gly67, Lys70, Thr71, Thr72, 133–135 (EDF), Arg176, Tyr186, and Arg223 contribute to the ATP site. Thr71 lines the Mg(2+) pocket. The small ATPAse domain (RuvB-S) stretch occupies residues 187–257 (NIADLTTIVS…IAGSALDMLA (71 aa)). A head domain (RuvB-H) region spans residues 260–331 (RRGLDHLDRR…LTQMAIDQML (72 aa)). Positions 296, 315, and 320 each coordinate DNA.

This sequence belongs to the RuvB family. In terms of assembly, homohexamer. Forms an RuvA(8)-RuvB(12)-Holliday junction (HJ) complex. HJ DNA is sandwiched between 2 RuvA tetramers; dsDNA enters through RuvA and exits via RuvB. An RuvB hexamer assembles on each DNA strand where it exits the tetramer. Each RuvB hexamer is contacted by two RuvA subunits (via domain III) on 2 adjacent RuvB subunits; this complex drives branch migration. In the full resolvosome a probable DNA-RuvA(4)-RuvB(12)-RuvC(2) complex forms which resolves the HJ.

It is found in the cytoplasm. It catalyses the reaction ATP + H2O = ADP + phosphate + H(+). Functionally, the RuvA-RuvB-RuvC complex processes Holliday junction (HJ) DNA during genetic recombination and DNA repair, while the RuvA-RuvB complex plays an important role in the rescue of blocked DNA replication forks via replication fork reversal (RFR). RuvA specifically binds to HJ cruciform DNA, conferring on it an open structure. The RuvB hexamer acts as an ATP-dependent pump, pulling dsDNA into and through the RuvAB complex. RuvB forms 2 homohexamers on either side of HJ DNA bound by 1 or 2 RuvA tetramers; 4 subunits per hexamer contact DNA at a time. Coordinated motions by a converter formed by DNA-disengaged RuvB subunits stimulates ATP hydrolysis and nucleotide exchange. Immobilization of the converter enables RuvB to convert the ATP-contained energy into a lever motion, pulling 2 nucleotides of DNA out of the RuvA tetramer per ATP hydrolyzed, thus driving DNA branch migration. The RuvB motors rotate together with the DNA substrate, which together with the progressing nucleotide cycle form the mechanistic basis for DNA recombination by continuous HJ branch migration. Branch migration allows RuvC to scan DNA until it finds its consensus sequence, where it cleaves and resolves cruciform DNA. The sequence is that of Holliday junction branch migration complex subunit RuvB from Psychrobacter cryohalolentis (strain ATCC BAA-1226 / DSM 17306 / VKM B-2378 / K5).